The sequence spans 155 residues: Protein Smg homolog (155 aa).

Belongs to the Smg family.

This chain is Protein Smg homolog, found in Methylococcus capsulatus (strain ATCC 33009 / NCIMB 11132 / Bath).